Here is a 168-residue protein sequence, read N- to C-terminus: Thiosulfate dehydrogenase [quinone] small subunit (168 aa).

The chain crosses the membrane as a helical span at residues 6–26 (IIGIIFAILVVGWILATGQWA).

Heterodimer of a large and a small subunit in a 2:2 stoichiometry. TQO may associate with the terminal oxidase formed by doxBCE. Post-translationally, the N-terminus is blocked. Glycosylated.

It localises to the cell membrane. It catalyses the reaction 6-decylubiquinone + 2 thiosulfate = 6-decylubiquinol + tetrathionate. Inhibited by sulfite, metabisulfite and dithonite. Functionally, TQO plays a role in sulfur oxidation and is proposed to couple sulfur oxidation to dioxygen reduction; caldariellaquinone or sulfolobus quinone seem to serve to transfer electrons to the electron transport chain terminal oxidase formed by DoxBCE. The sequence is that of Thiosulfate dehydrogenase [quinone] small subunit (doxA) from Acidianus ambivalens (Desulfurolobus ambivalens).